Reading from the N-terminus, the 413-residue chain is Corticotropin-releasing factor receptor 2 (413 aa).

Residues 1–22 (MDSTIFEIIIDEFDANCSLLDA) constitute a signal peptide (not cleaved). Residues 1 to 110 (MDSTIFEIII…CVPILDNKRK (110 aa)) are Extracellular-facing. Asn-16 carries an N-linked (GlcNAc...) asparagine glycan. Disulfide bonds link Cys-17–Cys-53, Cys-43–Cys-86, and Cys-67–Cys-101. 3 N-linked (GlcNAc...) asparagine glycosylation sites follow: Asn-77, Asn-89, and Asn-97. A helical transmembrane segment spans residues 111–141 (YALHYKIALIINYLGHCISILALVIAFLLFL). Residues 142 to 148 (CLRSIRC) lie on the Cytoplasmic side of the membrane. A helical membrane pass occupies residues 149-173 (LRNIIHWNLITTFILRNIMWFLLQM). At 174–187 (IDHNIHESNEVWCR) the chain is on the extracellular side. Cysteines 186 and 256 form a disulfide. The helical transmembrane segment at 188–216 (CITTIYNYFVVTNFFWMFVEGCYLHTAIV) threads the bilayer. Residues 217 to 223 (MTYSTDK) are Cytoplasmic-facing. Residues 224–251 (LRKWVFLFIGWCIPSPIIVTWAICKLFY) traverse the membrane as a helical segment. Over 252-267 (ENEQCWIGKEPGKYID) the chain is Extracellular. Residues 268–293 (YIYQGRVILVLLINFVFLFNIVRILM) traverse the membrane as a helical segment. Residues 294-304 (TKLRASTTSET) are Cytoplasmic-facing. A helical transmembrane segment spans residues 305-329 (IQYRKAVKATLVLLPLLGITYMLFF). Residues 330–336 (VNPGEDD) lie on the Extracellular side of the membrane. A helical membrane pass occupies residues 337–366 (VSQIVFIYFNSFLQSFQGFFVSVFYCFLNG). The Cytoplasmic segment spans residues 367 to 413 (EVRSAARKRWHRWQDHHSLRVRVARAMSIPTSPTRISFHSIKQTAAV).

It belongs to the G-protein coupled receptor 2 family. Post-translationally, a N-glycosylation site within the signal peptide impedes its proper cleavage and function.

Its subcellular location is the cell membrane. Functionally, G-protein coupled receptor for CRH (corticotropin-releasing factor), UCN (urocortin), UCN2 and UCN3. Has high affinity for UCN. Ligand binding causes a conformation change that triggers signaling via guanine nucleotide-binding proteins (G proteins) and down-stream effectors, such as adenylate cyclase. Promotes the activation of adenylate cyclase, leading to increased intracellular cAMP levels. The polypeptide is Corticotropin-releasing factor receptor 2 (crhr2) (Xenopus laevis (African clawed frog)).